The primary structure comprises 309 residues: Eugenol synthase 2 (309 aa).

Residues 13-16 (TGYI), 35-45 (VRETTVSDPVK), Arg-36, 86-88 (FMQ), 111-113 (SEF), Lys-134, and 154-156 (NCF) contribute to the NADP(+) site. The active-site Proton donor/acceptor is the Lys-134.

It belongs to the NmrA-type oxidoreductase family. Mostly expressed in petals, and, to a lower extent, in sepals, stamens and pistils.

It catalyses the reaction eugenol + a carboxylate + NADP(+) = a coniferyl ester + NADPH. It carries out the reaction eugenol + acetate + NADP(+) = (E)-coniferyl acetate + NADPH. It participates in aromatic compound metabolism; phenylpropanoid biosynthesis. In terms of biological role, catalyzes the synthesis of the phenylpropene eugenol from coniferyl acetate. Phenylpropenes are produced by plants as defense compounds with antimicrobial and antianimal properties, or as floral attractants of pollinators. This Clarkia breweri (Fairy fans) protein is Eugenol synthase 2.